The following is a 166-amino-acid chain: Putative 4-hydroxy-4-methyl-2-oxoglutarate aldolase (166 aa).

Residues 74–77 (GDQI) and Arg96 contribute to the substrate site. Asp97 contacts a divalent metal cation.

This sequence belongs to the class II aldolase/RraA-like family. As to quaternary structure, homotrimer. Requires a divalent metal cation as cofactor.

The catalysed reaction is 4-hydroxy-4-methyl-2-oxoglutarate = 2 pyruvate. It carries out the reaction oxaloacetate + H(+) = pyruvate + CO2. Catalyzes the aldol cleavage of 4-hydroxy-4-methyl-2-oxoglutarate (HMG) into 2 molecules of pyruvate. Also contains a secondary oxaloacetate (OAA) decarboxylase activity due to the common pyruvate enolate transition state formed following C-C bond cleavage in the retro-aldol and decarboxylation reactions. The polypeptide is Putative 4-hydroxy-4-methyl-2-oxoglutarate aldolase (Xanthomonas campestris pv. campestris (strain 8004)).